A 183-amino-acid polypeptide reads, in one-letter code: NADH-quinone oxidoreductase subunit A (183 aa).

The next 3 membrane-spanning stretches (helical) occupy residues 11–31 (IIAF…VPLL), 63–83 (FYLV…LYAW), and 98–118 (VVIF…VGAL). The interval 159–183 (TGQIPAQSSGRVKSKTTPALSSEKE) is disordered.

It belongs to the complex I subunit 3 family. NDH-1 is composed of 14 different subunits. Subunits NuoA, H, J, K, L, M, N constitute the membrane sector of the complex.

It is found in the cell inner membrane. The catalysed reaction is a quinone + NADH + 5 H(+)(in) = a quinol + NAD(+) + 4 H(+)(out). Its function is as follows. NDH-1 shuttles electrons from NADH, via FMN and iron-sulfur (Fe-S) centers, to quinones in the respiratory chain. The immediate electron acceptor for the enzyme in this species is believed to be ubiquinone. Couples the redox reaction to proton translocation (for every two electrons transferred, four hydrogen ions are translocated across the cytoplasmic membrane), and thus conserves the redox energy in a proton gradient. This Acinetobacter baumannii (strain ACICU) protein is NADH-quinone oxidoreductase subunit A.